A 152-amino-acid chain; its full sequence is Superoxide dismutase [Cu-Zn] 2 (152 aa).

His-45, His-47, and His-62 together coordinate Cu cation. A disulfide bridge links Cys-56 with Cys-145. 4 residues coordinate Zn(2+): His-62, His-70, His-79, and Asp-82. His-119 provides a ligand contact to Cu cation.

The protein belongs to the Cu-Zn superoxide dismutase family. As to quaternary structure, homodimer. Cu cation serves as cofactor. Requires Zn(2+) as cofactor.

It localises to the cytoplasm. The catalysed reaction is 2 superoxide + 2 H(+) = H2O2 + O2. In terms of biological role, destroys radicals which are normally produced within the cells and which are toxic to biological systems. This is Superoxide dismutase [Cu-Zn] 2 (SODCC2) from Oryza sativa subsp. japonica (Rice).